A 122-amino-acid polypeptide reads, in one-letter code: S-adenosylmethionine decarboxylase proenzyme (122 aa).

S63 functions as the Schiff-base intermediate with substrate; via pyruvic acid in the catalytic mechanism. A Pyruvic acid (Ser); by autocatalysis modification is found at S63. The active-site Proton acceptor; for processing activity is the H68. Residue C83 is the Proton donor; for catalytic activity of the active site.

It belongs to the prokaryotic AdoMetDC family. Type 1 subfamily. In terms of assembly, heterotetramer of two alpha and two beta chains arranged as a dimer of alpha/beta heterodimers. Requires pyruvate as cofactor. In terms of processing, is synthesized initially as an inactive proenzyme. Formation of the active enzyme involves a self-maturation process in which the active site pyruvoyl group is generated from an internal serine residue via an autocatalytic post-translational modification. Two non-identical subunits are generated from the proenzyme in this reaction, and the pyruvate is formed at the N-terminus of the alpha chain, which is derived from the carboxyl end of the proenzyme. The post-translation cleavage follows an unusual pathway, termed non-hydrolytic serinolysis, in which the side chain hydroxyl group of the serine supplies its oxygen atom to form the C-terminus of the beta chain, while the remainder of the serine residue undergoes an oxidative deamination to produce ammonia and the pyruvoyl group blocking the N-terminus of the alpha chain.

It carries out the reaction S-adenosyl-L-methionine + H(+) = S-adenosyl 3-(methylsulfanyl)propylamine + CO2. It functions in the pathway amine and polyamine biosynthesis; S-adenosylmethioninamine biosynthesis; S-adenosylmethioninamine from S-adenosyl-L-methionine: step 1/1. Functionally, catalyzes the decarboxylation of S-adenosylmethionine to S-adenosylmethioninamine (dcAdoMet), the propylamine donor required for the synthesis of the polyamines spermine and spermidine from the diamine putrescine. In Methanococcus maripaludis (strain C7 / ATCC BAA-1331), this protein is S-adenosylmethionine decarboxylase proenzyme.